We begin with the raw amino-acid sequence, 218 residues long: MDFIGAYSQEHLAFLWDGFLVTLYVAFISIILSFFFGLIAGTLRYAKVPVLSQLIAVLVETIRNLPLLLIIFFTFFALPEIGIKLEITAAAITALTIFESAMLSEIIRSGLKSIDKGQIEAARSSGLSYTQTLFFIVMPQALRRMVPPIVSQFISLLKDTSLAVVIALPELIHNAQIINGQSADGSYFFPIFLLAALMYFAVNYSLSLAARRLEVRQT.

3 helical membrane-spanning segments follow: residues 19-39, 65-85, and 188-208; these read FLVT…FGLI, LPLL…GIKL, and FFPI…SLSL. Residues 19–210 form the ABC transmembrane type-1 domain; that stretch reads FLVTLYVAFI…AVNYSLSLAA (192 aa).

Belongs to the binding-protein-dependent transport system permease family. In terms of assembly, the complex is composed of two ATP-binding proteins (GlnQ), two transmembrane proteins (GlnM and GlnP) and a solute-binding protein (GlnH).

It localises to the cell membrane. Part of the ABC transporter complex GlnHMPQ involved in glutamine transport. Probably responsible for the translocation of the substrate across the membrane. This Bacillus subtilis (strain 168) protein is Probable glutamine ABC transporter permease protein GlnP (glnP).